A 69-amino-acid polypeptide reads, in one-letter code: Cytochrome c oxidase subunit 8A, mitochondrial (69 aa).

The transit peptide at 1-25 (MSVLTSLLLRGLTGSARWLPVPRAK) directs the protein to the mitochondrion. Residues 2-19 (SVLTSLLLRGLTGSARWL) carry the SIFI-degron motif. At 26–36 (VHSMPPEVELG) the chain is on the mitochondrial matrix side. The helical transmembrane segment at 37–60 (IMEKAIGLTSCFVSLFLPAGWILS) threads the bilayer. Residues 61 to 69 (HLEDYKRPE) lie on the Mitochondrial intermembrane side of the membrane.

This sequence belongs to the cytochrome c oxidase VIII family. As to quaternary structure, component of the cytochrome c oxidase (complex IV, CIV), a multisubunit enzyme composed of 14 subunits. The complex is composed of a catalytic core of 3 subunits MT-CO1, MT-CO2 and MT-CO3, encoded in the mitochondrial DNA, and 11 supernumerary subunits COX4I, COX5A, COX5B, COX6A, COX6B, COX6C, COX7A, COX7B, COX7C, COX8 and NDUFA4, which are encoded in the nuclear genome. The complex exists as a monomer or a dimer and forms supercomplexes (SCs) in the inner mitochondrial membrane with NADH-ubiquinone oxidoreductase (complex I, CI) and ubiquinol-cytochrome c oxidoreductase (cytochrome b-c1 complex, complex III, CIII), resulting in different assemblies (supercomplex SCI(1)III(2)IV(1) and megacomplex MCI(2)III(2)IV(2)). Post-translationally, in response to mitochondrial stress, the precursor protein is ubiquitinated by the SIFI complex in the cytoplasm before mitochondrial import, leading to its degradation. Within the SIFI complex, UBR4 initiates ubiquitin chain that are further elongated or branched by KCMF1.

The protein resides in the mitochondrion inner membrane. It functions in the pathway energy metabolism; oxidative phosphorylation. Functionally, component of the cytochrome c oxidase, the last enzyme in the mitochondrial electron transport chain which drives oxidative phosphorylation. The respiratory chain contains 3 multisubunit complexes succinate dehydrogenase (complex II, CII), ubiquinol-cytochrome c oxidoreductase (cytochrome b-c1 complex, complex III, CIII) and cytochrome c oxidase (complex IV, CIV), that cooperate to transfer electrons derived from NADH and succinate to molecular oxygen, creating an electrochemical gradient over the inner membrane that drives transmembrane transport and the ATP synthase. Cytochrome c oxidase is the component of the respiratory chain that catalyzes the reduction of oxygen to water. Electrons originating from reduced cytochrome c in the intermembrane space (IMS) are transferred via the dinuclear copper A center (CU(A)) of subunit 2 and heme A of subunit 1 to the active site in subunit 1, a binuclear center (BNC) formed by heme A3 and copper B (CU(B)). The BNC reduces molecular oxygen to 2 water molecules using 4 electrons from cytochrome c in the IMS and 4 protons from the mitochondrial matrix. The polypeptide is Cytochrome c oxidase subunit 8A, mitochondrial (COX8A) (Macaca silenus (Lion-tailed macaque)).